The primary structure comprises 3164 residues: MAAVTFASAITNAITSKPALTGMVQFGSFPPMPLRSTTVTTVATSVAQPKLYTVQFGSLDPVVVKSGAGSLAKATRQQPNVEIDVSLSEAAALEVAKPRSNAVLRMHEEANKERALFLDWEASLKRSSYGIAEDEKVVMTTHGVSKIVPRSSRAMKLKRARERRRAQQPIILKWEPKLSGISIGGGLSASVIEAEEVRTKWPLHKTPSMKKRTVHRICKMNDQGVDMLTRSLVKIFKTKSANIEYIGKKSIKVDFIRKERTKFARIQVAHLLGKRAQRDLLTGMEENHFIDILSKYSGNKTTINPGVVCAGWSGIVVGNGILTQKRSRSPSEAFVIRGEHEGKLYDARIKVTRTMSHKIVHFSAAGANFWKGFDRCFLAYRSDNREHTCYSGLDVTECGEVAALMCLAMFPCGKITCPDCVTDSELSQGQASGPSMKHRLTQLRDVIKSSYPRFKHAVQILDRYEQSLSSANENYQDFAEIQSISDGVEKAAFPHVNKLNAILIKGATVTGEEFSQATKHLLEIARYLKNRTENIEKGSLKSFRNKISQKAHINPTLMCDNQLDRNGNFIWGERGYHAKRFFSNYFEIIDPKKGYTQYETRAVPNGSRKLAIGKLIVPTNFEVLREQMKGEPVEPYPVTVECVSKLQGDFVHACCCVTTESGDPVLSEIKMPTKHHLVIGNSGDPKYIDLPEIEENKMYIAKEGYCYINIFLAMLVNVKESQAKEFTKVVRDKLVGELGKWPTLLDVATACYFLKVFYPDVANAELPRMLVDHKTKIIHVVDSYGSLSTGYHVLKTNTVEQLIKFTRCNLESSLKHYRVGGTEWEDTHGSSNIDNPQWCIKRLIKGVYKPKQLKEDMLANPFLPLYALLSPGVILAFYNSGSLEYLMNHYIRVDSNVAVLLVVLKSLAKKVSTSQSVLAQLQIIERSLPELIEAKANVNGPDDAATRACNRFMGMLLHMAEPNWELADGGYTILRDHSISILEKSYLQILDEAWNELSWSERCAIRYYSSKQAIFTQKDLPMKSEADLGGRYSVSVMSSYERSKQCMKSVHSSIGNRLRSSMSWTSSKVSNSVCRTINYLVPDVFKFMNVLVCISLLIKMTAEANHIVTTQRRLKLDVEETERRKIEWELAFHHAILTQSAGQHPTIDEFRAYIADKAPHLSEHIEPEEKAVVHQAKRQSEQELERIIAFVALVLMMFDAERSDCVTKILNKLKGLVATVEPTVYHQTLNDIEDDLSERNLFVDFELSSDGDMLQQLPAEKTFASWWSHQLSRGFTIPHYRTEGKFMTFTRATATEVAGKIAHESDKDILLMGAVGSGKSTGLPYHLSRKGNVLLLEPTRPLAENVHKQLSQAPFHQNTTLRMRGLTAFGSAPISVMTSGFALNYFANNRMRIEEFDFVIFDECHVHDANAMAMRCLLHECDYSGKIIKVSATPPGREVEFSTQYPVSISTEDTLSFQDFVNAQGSGSNCDVISKGDNILVYVASYNEVDALSKLLIERDFKVTKVDGRTMKVGNIEITTSGTPSKKHFIVATNIIENGVTLDIDVVADFGTKVLPYLDTDSRMLSTTKTSINYGERIQRLGRVGRHKPGHALRIGHTEKGLSEVPSCIATEAALKCFTYGLPVITNNVSTSILGNVTVKQARTMSVFEITPFYTSQVVRYDGSMHPQVHALLKRFKLRDSEIVLNKLAIPHRGVNAWLTASEYARLGANVEDRRDVRIPFMCRDIPEKLHLDMWDVIVKFKGDAGFGRLSSASASKVAYTLQTDVNSIQRTVTIIDTLIAEERRKQEYFKTVTSNCVSSSNFSLQSITNAIKSRMMKDHTCENISVLEGAKSQLLEFRNLNADHSFATKTDGISRHFMSEYGALEAVHHQNTSDMSKFLKLKGKWNKTLITRDVLVLCGVLGGGLWMVIQHLRSKMSEPVTHEAKGKRQRQKLKFRNARDNKMGREVYGDDDTIEHFFGDAYTKKGKSKGRTRGIGHKNRKFINMYGFDPEDFSAVRFVDPLTGATLDDNPLTDITLVQEHFGNIRMDLLGEDELDSNEIRVNKTIQAYYMNNKTGKALKVDLTPHIPLKVCDLHATIAGFPERENELRQTGKAQPINIDEVPRANNELVPVDHESNSMFRGLRDYNPISNNICHLTNVSDGASNSLYGVGFGPLILTNRHLFERNNGELVIKSRHGEFVIKNTTQLHLLPIPDRDLLLIRLPKDVPPFPQKLGFRQPEKGERICMVGSNFQTKSITSIVSETSTIMPVENSQFWKHWISTKDGQCGSPMVSTKDGKILGLHSLANFQNSINYFAAFPDDFAEKYLHTIEAHEWVKHWKYNTSAISWGSLNIQASQPSGLFKVSKLISDLDSTAVYAQTQQNRWMFEQLNGNLKAIAHCPSQLVTKHTVKGKCQMFDLYLKLHDEAREYFQPMLGQYQKSKLNREAYAKDLLKYATPIEAGNIDCDLFEKTVEIVVSDLRGYGFETCNYVTDENDIFEALNMKSAVGALYKGKKKDYFAEFTPEMKEEILKQSCERLFLGKMGVWNGSLKAELRPLEKVEANKTRTFTAAPLDTLLGGKVCVDDFNNQFYDHNLRAPWSVGMTKFYCGWDRLLESLPDGWVYCDADGSQFDSSLSPYLINAVLNIRLGFMEEWDIGEVMLRNLYTEIVYTPISTPDGTLVKKFKGNNSGQPSTVVDNTLMVILAVNYSLKKSGIPSELRDSIIRFFVNGDDLLLSVHPEYEYILDTMADNFRELGLKYTFDSRTREKGDLWFMSHQGHKREGIWIPKLEPERIVSILEWDRSKEPCHRLEAICAAMIESWGYDKLTHEIRKFYAWMIEQAPFSSLAQEGKAPYIAETALRKLYLDKEPAQEDLTHYLQAIFEDYEDGAEACVYHQAGETLDAGLTDEQKQAEKEKKEREKAEKERERQKQLALKKGKDVAQEEGKRDKEVNAGTSGTFSVPRLKSLTSKMRVPRYEKRVALNLDHLILYTPEQTDLSNTRSTRKQFDTWFEGVMADYELTEDKMQIILNGLMVWCIENGTSPNINGMWVMMDGDDQVEFPIKPLIDHAKPTFRQIMAHFSDVAEAYIEKRNQDRPYMPRYGLQRNLTDMSLARYAFDFYEMTSRTPIRAREAHIQMKAAALRGANNNLFGLDGNVGTTVENTERHTTEDVNRNMHNLLGVQGL.

Positions 219–362 constitute a Peptidase S30 domain; that stretch reads KMNDQGVDML…RTMSHKIVHF (144 aa). Residues His-270, Asp-279, and Ser-313 each act as for P1 proteinase activity in the active site. The Involved in interaction with stylet and aphid transmission signature appears at 414-417; that stretch reads KITC. An Involved in virions binding and aphid transmission motif is present at residues 672–674; it reads PTK. The Peptidase C6 domain maps to 698 to 820; the sequence is MYIAKEGYCY…ESSLKHYRVG (123 aa). Catalysis depends on for helper component proteinase activity residues Cys-706 and His-779. The 153-residue stretch at 1300–1452 folds into the Helicase ATP-binding domain; it reads KIAHESDKDI…TQYPVSISTE (153 aa). Residue 1313-1320 coordinates ATP; the sequence is GAVGSGKS. Positions 1402–1405 match the DEAH box motif; sequence DECH. One can recognise a Helicase C-terminal domain in the interval 1471-1630; it reads DVISKGDNIL…GLPVITNNVS (160 aa). The Cytoplasmic portion of the chain corresponds to 1872-1889; the sequence is NTSDMSKFLKLKGKWNKT. Residues 1890–1910 form a helical membrane-spanning segment; sequence LITRDVLVLCGVLGGGLWMVI. The Lumenal segment spans residues 1911–1924; the sequence is QHLRSKMSEPVTHE. A Nuclear localization signal motif is present at residues 1965-1972; that stretch reads KKGKSKGR. Residue Tyr-1987 is modified to O-(5'-phospho-RNA)-tyrosine. The Peptidase C4 domain occupies 2117–2335; it reads SNSMFRGLRD…ISWGSLNIQA (219 aa). Active-site for nuclear inclusion protein A activity residues include His-2162, Asp-2197, and Cys-2267. A RdRp catalytic domain is found at 2601 to 2725; the sequence is WVYCDADGSQ…SVHPEYEYIL (125 aa). Positions 2884 to 2935 are disordered; the sequence is GLTDEQKQAEKEKKEREKAEKERERQKQLALKKGKDVAQEEGKRDKEVNAGT. A compositionally biased stretch (basic and acidic residues) spans 2887-2931; the sequence is DEQKQAEKEKKEREKAEKERERQKQLALKKGKDVAQEEGKRDKEV. A Phosphothreonine modification is found at Thr-3147.

It belongs to the potyviridae genome polyprotein family. Interacts with host eIF4E protein (via cap-binding region); this interaction mediates the translation of the VPg-viral RNA conjugates. Part of a complex that comprises VPg, RNA, host EIF4E and EIF4G; this interaction mediates the translation of the VPg-viral RNA conjugates. In terms of assembly, interacts, via N-terminal region, with host Sec24a protein in COPII-coated vesicles. This binding triggers the formation of host endoplasmic reticulum (ER)-derived viral vesicles involved in cell-to-cell viral movement. VPg is uridylylated by the polymerase and is covalently attached to the 5'-end of the genomic RNA. This uridylylated form acts as a nucleotide-peptide primer for the polymerase. Post-translationally, potyviral RNA is expressed as two polyproteins which undergo post-translational proteolytic processing. Genome polyprotein is processed by NIa-pro, P1 and HC-pro proteinases resulting in the production of at least ten individual proteins. P3N-PIPO polyprotein is cleaved by P1 and HC-pro proteinases resulting in the production of three individual proteins. The P1 proteinase and the HC-pro cleave only their respective C-termini autocatalytically. 6K1 is essential for proper proteolytic separation of P3 from CI.

It is found in the host cytoplasm. The protein localises to the host nucleus. It localises to the host cytoplasmic vesicle. Its subcellular location is the host membrane. The protein resides in the virion. It catalyses the reaction RNA(n) + a ribonucleoside 5'-triphosphate = RNA(n+1) + diphosphate. It carries out the reaction Hydrolyzes glutaminyl bonds, and activity is further restricted by preferences for the amino acids in P6 - P1' that vary with the species of potyvirus, e.g. Glu-Xaa-Xaa-Tyr-Xaa-Gln-|-(Ser or Gly) for the enzyme from tobacco etch virus. The natural substrate is the viral polyprotein, but other proteins and oligopeptides containing the appropriate consensus sequence are also cleaved.. The enzyme catalyses Hydrolyzes a Gly-|-Gly bond at its own C-terminus, commonly in the sequence -Tyr-Xaa-Val-Gly-|-Gly, in the processing of the potyviral polyprotein.. Its function is as follows. Cysteine protease that cleaves a Gly-Gly dipeptide at its own C-terminus. Required for aphid transmission and also has proteolytic activity. Interacts with virions and aphid stylets. Acts as a suppressor of RNA-mediated gene silencing, also known as post-transcriptional gene silencing (PTGS), a mechanism of plant viral defense that limits the accumulation of viral RNAs. May have RNA-binding activity. Has helicase activity. It may be involved in replication. Functionally, indispensable for virus replication. Reduces the abundance of host transcripts related to jasmonic acid biosynthesis therefore altering the host defenses. In order to increase its own stability, decreases host protein degradation pathways. In terms of biological role, responsible for the formation of peripheral motile host endoplasmic reticulum (ER)-derived viral vesicles called 'viral factories', seat of the viral RNA (vRNA) replication and carrying vRNA to plasmodesmata for delivery into adjacent non-infected cells; this process relies on host Sec24a-binding. Its function is as follows. Mediates the cap-independent, EIF4E-dependent translation of viral genomic RNAs. Binds to the cap-binding site of host EIF4E and thus interferes with the host EIF4E-dependent mRNA export and translation. VPg-RNA directly binds EIF4E and is a template for transcription. Also forms trimeric complexes with EIF4E-EIF4G, which are templates for translation. Has RNA-binding and proteolytic activities. Functionally, RNA-dependent RNA polymerase that ensures transcription and replication of viral RNA (vRNA). In terms of biological role, involved in aphid transmission, cell-to-cell and systemis movement, encapsidation of the viral RNA and in the regulation of viral RNA amplification. This chain is Genome polyprotein, found in Turnip mosaic virus (strain Japanese) (TuMV).